A 513-amino-acid chain; its full sequence is MPYLLEMKNITKTFGSVKAIDNVSLRLNAGEIVSLCGENGSGKSTLMKVLCGIYPHGSYEGEIIFAGEEIQASHIRDTERKGIAIIHQELALVKELTVLENIFLGNEITHNGIMDYDLMTLRCQKLLAQVSLSISPDTRVGDLGLGQQQLVEIAKALNKQVRLLILDEPTASLTEQETSVLLDIIRDLQQHGIACIYISHKLNEVKAISDTICVIRDGQHIGTRDAAGMSEDDIITMMVGRELTALYPNEPHTTGDEILRIEHLTAWHPVNRHIKRVNDVSFSLKRGEILGIAGLVGAGRTETIQCLFGVWPGQWEGKIYIDGKQVDIRNCQQAIAQGIAMVPEDRKRDGIVPVMAVGKNITLAALNKFTGGISQLDDAAEQKCILESIQQLKVKTSSPDLAIGRLSGGNQQKAILARCLLLNPRILILDEPTRGIDIGAKYEIYKLINQLVQQGIAVIVISSELPEVLGLSDRVLVMHEGKLKANLINHNLTQEQVMEAALRSEHHVEKQSV.

ABC transporter domains follow at residues 5–242 and 259–505; these read LEMK…VGRE and LRIE…LRSE. ATP is bound at residue 37–44; that stretch reads GENGSGKS.

It belongs to the ABC transporter superfamily. Xylose importer (TC 3.A.1.2.4) family. As to quaternary structure, the complex is composed of two ATP-binding proteins (XylG), two transmembrane proteins (XylH) and a solute-binding protein (XylF).

It localises to the cell inner membrane. The catalysed reaction is D-xylose(out) + ATP + H2O = D-xylose(in) + ADP + phosphate + H(+). Its function is as follows. Part of the ABC transporter complex XylFGH involved in xylose import. Responsible for energy coupling to the transport system. The polypeptide is Xylose import ATP-binding protein XylG (Shigella boydii serotype 4 (strain Sb227)).